A 952-amino-acid polypeptide reads, in one-letter code: Valine--tRNA ligase (952 aa).

A 'HIGH' region motif is present at residues 42-52 (PNVTGSLHMGH). The 'KMSKS' region signature appears at 554–558 (KMSKS). ATP is bound at residue K557. Residues 888-952 (AELARLDGEI…EEQKKTIAAL (65 aa)) are a coiled coil.

It belongs to the class-I aminoacyl-tRNA synthetase family. ValS type 1 subfamily. Monomer.

It localises to the cytoplasm. It carries out the reaction tRNA(Val) + L-valine + ATP = L-valyl-tRNA(Val) + AMP + diphosphate. Its function is as follows. Catalyzes the attachment of valine to tRNA(Val). As ValRS can inadvertently accommodate and process structurally similar amino acids such as threonine, to avoid such errors, it has a 'posttransfer' editing activity that hydrolyzes mischarged Thr-tRNA(Val) in a tRNA-dependent manner. In Vibrio parahaemolyticus serotype O3:K6 (strain RIMD 2210633), this protein is Valine--tRNA ligase.